Reading from the N-terminus, the 171-residue chain is Adenine phosphoribosyltransferase (171 aa).

The protein belongs to the purine/pyrimidine phosphoribosyltransferase family. In terms of assembly, homodimer.

Its subcellular location is the cytoplasm. It carries out the reaction AMP + diphosphate = 5-phospho-alpha-D-ribose 1-diphosphate + adenine. It functions in the pathway purine metabolism; AMP biosynthesis via salvage pathway; AMP from adenine: step 1/1. Functionally, catalyzes a salvage reaction resulting in the formation of AMP, that is energically less costly than de novo synthesis. The polypeptide is Adenine phosphoribosyltransferase (Christiangramia forsetii (strain DSM 17595 / CGMCC 1.15422 / KT0803) (Gramella forsetii)).